Consider the following 86-residue polypeptide: Anti-adapter protein IraP (86 aa).

Residues 1 to 38 (MKNLIAELLVKLAQKEEEAKELTVQVEALEIVVTALLR) adopt a coiled-coil conformation.

The protein belongs to the IraP family. In terms of assembly, interacts with RssB.

It is found in the cytoplasm. Inhibits RpoS proteolysis by regulating RssB activity, thereby increasing the stability of the sigma stress factor RpoS especially during phosphate starvation, but also in stationary phase and during nitrogen starvation. Its effect on RpoS stability is due to its interaction with RssB, which probably blocks the interaction of RssB with RpoS, and the consequent delivery of the RssB-RpoS complex to the ClpXP protein degradation pathway. This chain is Anti-adapter protein IraP, found in Klebsiella pneumoniae (strain 342).